We begin with the raw amino-acid sequence, 465 residues long: MLPSTIQTLTLFLTSGGVLLSLYVSASLSYLLYSDILLKFSSKITAPTMTLDCANASNVQAVNRSATKEMTFLLPEPEWTYPRLSCQGSTFQKALLISPHRFGEARGNSAPLIIREPFIACGPKECKHFALTHYAAQPGGYYNGTREDRNKLRHLISVKLGKIPTVENSIFHMAAWSGSACHDGREWTYIGVDGPDSNALIKIKYGEAYTDTYHSYANNILRTQESACNCIGGDCYLMITDGSASGISKCRFLKIREGRIIKEIFPTGRVEHTEECTCGFASNKTIECACRDNSYTAKRPFVKLNVETDTAEIRLMCTETYLDTPRPDDGSITGPCESNGDKGRGGIKGGFVHQRMASKIGRWYSRTMSKTERMGMELYVRYDGDPWTDSDALAHSGVMVSMKEPGWYSFGFEIKDKKCDVPCIGIEMVHDGGKKTWHSAATAIYCLMGSGQLLWDTVTGVDMAL.

Topologically, residues 1 to 11 (MLPSTIQTLTL) are intravirion. A helical membrane pass occupies residues 12–34 (FLTSGGVLLSLYVSASLSYLLYS). Residues 13 to 35 (LTSGGVLLSLYVSASLSYLLYSD) form an involved in apical transport and lipid raft association region. Topologically, residues 35–465 (DILLKFSSKI…DTVTGVDMAL (431 aa)) are virion surface. The segment at 38–85 (LKFSSKITAPTMTLDCANASNVQAVNRSATKEMTFLLPEPEWTYPRLS) is hypervariable stalk region. 2 N-linked (GlcNAc...) asparagine; by host glycosylation sites follow: Asn55 and Asn63. 8 disulfide bridges follow: Cys86–Cys419, Cys121–Cys126, Cys181–Cys228, Cys230–Cys235, Cys276–Cys290, Cys278–Cys288, Cys317–Cys336, and Cys423–Cys446. Residues 88–465 (GSTFQKALLI…DTVTGVDMAL (378 aa)) are head of neuraminidase. Arg115 is a substrate binding site. Asn143 is a glycosylation site (N-linked (GlcNAc...) asparagine; by host). Asp148 acts as the Proton donor/acceptor in catalysis. Substrate is bound at residue Arg149. Substrate is bound at residue 274 to 275 (EE). Asn283 carries N-linked (GlcNAc...) asparagine; by host glycosylation. Substrate is bound at residue Arg291. Residues Asp292, Thr296, Asp323, Gly343, and Gly345 each contribute to the Ca(2+) site. Substrate is bound at residue Arg373. The active-site Nucleophile is Tyr408.

Belongs to the glycosyl hydrolase 34 family. Homotetramer. It depends on Ca(2+) as a cofactor. Post-translationally, N-glycosylated.

It is found in the virion membrane. It localises to the host apical cell membrane. It catalyses the reaction Hydrolysis of alpha-(2-&gt;3)-, alpha-(2-&gt;6)-, alpha-(2-&gt;8)- glycosidic linkages of terminal sialic acid residues in oligosaccharides, glycoproteins, glycolipids, colominic acid and synthetic substrates.. With respect to regulation, inhibited by the neuraminidase inhibitors zanamivir (Relenza) and oseltamivir (Tamiflu). These drugs interfere with the release of progeny virus from infected cells and are effective against all influenza strains. Resistance to neuraminidase inhibitors is quite rare. Catalyzes the removal of terminal sialic acid residues from viral and cellular glycoconjugates. Cleaves off the terminal sialic acids on the glycosylated HA during virus budding to facilitate virus release. Additionally helps virus spread through the circulation by further removing sialic acids from the cell surface. These cleavages prevent self-aggregation and ensure the efficient spread of the progeny virus from cell to cell. Otherwise, infection would be limited to one round of replication. Described as a receptor-destroying enzyme because it cleaves a terminal sialic acid from the cellular receptors. May facilitate viral invasion of the upper airways by cleaving the sialic acid moieties on the mucin of the airway epithelial cells. Likely to plays a role in the budding process through its association with lipid rafts during intracellular transport. May additionally display a raft-association independent effect on budding. Plays a role in the determination of host range restriction on replication and virulence. Sialidase activity in late endosome/lysosome traffic seems to enhance virus replication. The sequence is that of Neuraminidase from Influenza B virus (strain B/Beijing/1/1987).